A 122-amino-acid polypeptide reads, in one-letter code: Succinate dehydrogenase assembly factor 2, mitochondrial (122 aa).

This sequence belongs to the SDHAF2 family. Interacts with the flavoprotein subunit within the SDH catalytic dimer.

It is found in the mitochondrion matrix. Its function is as follows. Plays an essential role in the assembly of succinate dehydrogenase (SDH), an enzyme complex (also referred to as respiratory complex II) that is a component of both the tricarboxylic acid (TCA) cycle and the mitochondrial electron transport chain, and which couples the oxidation of succinate to fumarate with the reduction of ubiquinone (coenzyme Q) to ubiquinol. Required for flavinylation (covalent attachment of FAD) of the flavoprotein subunit of the SDH catalytic dimer. The chain is Succinate dehydrogenase assembly factor 2, mitochondrial from Caenorhabditis briggsae.